Consider the following 122-residue polypeptide: Large ribosomal subunit protein bL12 (122 aa).

Belongs to the bacterial ribosomal protein bL12 family. Homodimer. Part of the ribosomal stalk of the 50S ribosomal subunit. Forms a multimeric L10(L12)X complex, where L10 forms an elongated spine to which 2 to 4 L12 dimers bind in a sequential fashion. Binds GTP-bound translation factors.

Functionally, forms part of the ribosomal stalk which helps the ribosome interact with GTP-bound translation factors. Is thus essential for accurate translation. In Buchnera aphidicola subsp. Cinara cedri (strain Cc), this protein is Large ribosomal subunit protein bL12.